Consider the following 247-residue polypeptide: uncharacterized protein (247 aa).

This is an uncharacterized protein from Rickettsia prowazekii (strain Madrid E).